The chain runs to 418 residues: Putative ion-transport protein YfeO (418 aa).

Transmembrane regions (helical) follow at residues 10-30 (LLLS…LIVV), 54-74 (DSPL…GLVI), 99-119 (ALPG…SLGP), 120-140 (EHPI…RLLP), 149-169 (ILAS…AALI), 186-206 (LFAP…FFHP), 223-243 (ILSG…AVWC), 258-278 (VLVL…GGPV), 300-320 (DYFL…ASGF), 322-342 (GGRI…LHEH), 343-363 (VPAV…VLVV), and 371-391 (LFMA…CIVM).

The protein belongs to the chloride channel (TC 2.A.49) family.

It is found in the cell membrane. The polypeptide is Putative ion-transport protein YfeO (Escherichia coli O8 (strain IAI1)).